The sequence spans 296 residues: Syntenin-2 (296 aa).

PDZ domains follow at residues 112-191 (EIHL…VRDR) and 196-271 (TVTM…IPTV).

In terms of assembly, monomer and homodimer. Interacts with SDCBP. Interacts with TM4SF1.

Its subcellular location is the cytoplasm. The protein localises to the nucleus. It localises to the nucleolus. It is found in the nucleoplasm. The protein resides in the cell membrane. Its subcellular location is the nucleus speckle. Functionally, binds phosphatidylinositol 4,5-bisphosphate (PIP2). May play a role in the organization of nuclear PIP2, cell division and cell survival. The sequence is that of Syntenin-2 (Sdcbp2) from Rattus norvegicus (Rat).